Consider the following 217-residue polypeptide: Probable transaldolase (217 aa).

The active-site Schiff-base intermediate with substrate is the Lys83.

Belongs to the transaldolase family. Type 3B subfamily.

Its subcellular location is the cytoplasm. The enzyme catalyses D-sedoheptulose 7-phosphate + D-glyceraldehyde 3-phosphate = D-erythrose 4-phosphate + beta-D-fructose 6-phosphate. The protein operates within carbohydrate degradation; pentose phosphate pathway; D-glyceraldehyde 3-phosphate and beta-D-fructose 6-phosphate from D-ribose 5-phosphate and D-xylulose 5-phosphate (non-oxidative stage): step 2/3. Transaldolase is important for the balance of metabolites in the pentose-phosphate pathway. The chain is Probable transaldolase from Caldicellulosiruptor saccharolyticus (strain ATCC 43494 / DSM 8903 / Tp8T 6331).